A 270-amino-acid chain; its full sequence is Basigin (270 aa).

A signal peptide spans 1-21; the sequence is MAAVLFALLALALLRAGGASA. An Ig-like C2-type domain is found at 22 to 103; sequence AAGTVTTSVQ…TGEATLTVDG (82 aa). The Extracellular segment spans residues 22–207; that stretch reads AAGTVTTSVQ…VTLRVRSRLA (186 aa). 2 cysteine pairs are disulfide-bonded: cysteine 41–cysteine 87 and cysteine 126–cysteine 185. 4 N-linked (GlcNAc...) asparagine glycosylation sites follow: asparagine 44, asparagine 75, asparagine 152, and asparagine 186. In terms of domain architecture, Ig-like V-type spans 105-203; it reads PRIKAVKKSE…DAAVVTLRVR (99 aa). A helical membrane pass occupies residues 208–228; it reads ALWPFLGIVAEVLVLVTVIFI. Topologically, residues 229 to 270 are cytoplasmic; the sequence is YEKRRKPDEVLDDEDAGAAPLKSSGHHVNDDKGKNVRQRNAS. A disordered region spans residues 239-270; the sequence is LDDEDAGAAPLKSSGHHVNDDKGKNVRQRNAS. The residue at position 252 (serine 252) is a Phosphoserine.

In terms of assembly, homooligomer. Interacts with VEGFA, KDR/VEGFR2, PPIA/CYPA, SLC1A3, SLC16A12, SLC16A11, ATP1B2, MAG, L1CAM and AJAP1. Interacts with PPIL2; regulates BSG transport to the cell membrane. Interacts with XKR8; promoting its localization at the cell membrane. Interacts with SLC16A3; interaction mediates SLC16A3 targeting to the plasma membrane. Interacts with SLC16A1; interaction mediates SLC16A1 targeting to the plasma membrane. Interacts with SLC16A6; this interaction mediates targeting to the plasma membrane.

It is found in the cell membrane. It localises to the endoplasmic reticulum membrane. The protein localises to the basolateral cell membrane. Signaling receptor for cyclophilins, essential for PPIA/CYPA and PPIB/CYPB-dependent signaling related to chemotaxis and adhesion of immune cells. Plays an important role in targeting the monocarboxylate transporters SLC16A1/GLUT1, SLC16A3, SLC16A8, SLC16A11 and SLC16A12 to the plasma membrane. Acts as a coreceptor for vascular endothelial growth factor receptor 2 (KDR/VEGFR2) in endothelial cells enhancing its VEGFA-mediated activation and downstream signaling. Promotes angiogenesis through EPAS1/HIF2A-mediated up-regulation of VEGFA and KDR/VEGFR2 in endothelial cells. In Oryctolagus cuniculus (Rabbit), this protein is Basigin (BSG).